A 1198-amino-acid polypeptide reads, in one-letter code: Potassium/sodium hyperpolarization-activated cyclic nucleotide-gated channel 4 (1198 aa).

The Cytoplasmic portion of the chain corresponds to 1–266; that stretch reads MDKLPPSMRK…PYSDFRFYWD (266 aa). A disordered region spans residues 25-183; the sequence is IMDEEEDGEE…PASASCEQPS (159 aa). Acidic residues predominate over residues 26-36; that stretch reads MDEEEDGEEEG. A compositionally biased stretch (gly residues) spans 105 to 118; it reads SRGGGSGGAGGGSS. Residues 121 to 132 show a composition bias toward basic and acidic residues; sequence HLHDSAEERRLI. Phosphoserine is present on Ser139. A compositionally biased stretch (pro residues) spans 164 to 174; the sequence is ASPPPQQPPQP. Residues 209-260 form an involved in subunit assembly region; sequence GQSGFMQRQFGAMLQPGVNKFSLRMFGSQKAVEREQERVKSAGFWIIHPYSD. A helical transmembrane segment spans residues 267–287; the sequence is LTMLLLMVGNLIIIPVGITFF. The Extracellular segment spans residues 288–293; that stretch reads KDENTT. A helical membrane pass occupies residues 294-314; that stretch reads PWIVFNVVSDTFFLIDLVLNF. The Cytoplasmic segment spans residues 315–340; that stretch reads RTGIVVEDNTEIILDPQRIKMKYLKS. The helical transmembrane segment at 341 to 361 threads the bilayer; it reads WFVVDFISSIPVDYIFLIVET. Over 362–368 the chain is Extracellular; it reads RIDSEVY. Residues 369-389 traverse the membrane as a helical; Voltage-sensor segment; the sequence is KTARALRIVRFTKILSLLRLL. Topologically, residues 390–420 are cytoplasmic; the sequence is RLSRLIRYIHQWEEIFHMTYDLASAVVRIVN. The helical transmembrane segment at 421–441 threads the bilayer; that stretch reads LIGMMLLLCHWDGCLQFLVPM. The Extracellular segment spans residues 442 to 464; the sequence is LQDFPHDCWVSINGMVNNSWGKQ. Asn458 is a glycosylation site (N-linked (GlcNAc...) asparagine). The pore-forming intramembrane region spans 465-486; it reads YSYALFKAMSHMLCIGYGRQAP. The Extracellular portion of the chain corresponds to 487–496; it reads VGMSDVWLTM. The helical transmembrane segment at 497 to 517 threads the bilayer; it reads LSMIVGATCYAMFIGHATALI. Residues 518 to 1198 are Cytoplasmic-facing; that stretch reads QSLDSSRRQY…PVRSKLPSNL (681 aa). 4 residues coordinate 3',5'-cyclic GMP: Tyr559, Lys562, Phe564, and Glu566. Gly659, Glu660, Cys662, Arg669, Thr670, Val673, and Arg710 together coordinate 3',5'-cyclic AMP. The disordered stretch occupies residues 804-1198; sequence AIFRPPPGPG…PVRSKLPSNL (395 aa). Low complexity-rich tracts occupy residues 831-856 and 866-880; these read SLIP…SSSS and SAPP…SSSS. The segment covering 881 to 894 has biased composition (pro residues); sequence SPPPGACSSPPAPT. Composition is skewed to low complexity over residues 895 to 905, 913 to 937, and 965 to 985; these read PSTSTAATTTG, LGGS…SPQA, and RSPS…SPGL. Pro residues predominate over residues 1027–1040; sequence GHSPGPPRTFPSAP. Residues 1043 to 1054 show a composition bias toward low complexity; sequence ASGSHGSLLLPP. Residues Ser1103 and Ser1106 each carry the phosphoserine modification. Residues 1120–1132 show a composition bias toward gly residues; sequence AGGGSGSSGGLGP.

Belongs to the potassium channel HCN family. Homotetramer. The potassium channel is composed of a homo- or heterotetrameric complex of pore-forming subunits. Interacts with PEX5L with a 4:4 HCN4:PEX5L stoichiometry; reduces the effects of cAMP on the voltage-dependence and rate of activation. Interacts with IRAG1; regulates HCN4 channel activity. Interacts with IRAG2; regulates HCN4 channel activity. S-palmitoylated. As to expression, highly expressed in pyramidal and granule layer of the hippocampus, in thalamus anterior nucleus, in the supraoptic nucleus in hypothalamus, in cerebellum, and in trapezoid nuclei and superior olivary complex in the auditory system. Detected in a subset of elongated cells in taste buds.

It localises to the cell membrane. The catalysed reaction is K(+)(in) = K(+)(out). The enzyme catalyses Na(+)(in) = Na(+)(out). Activated by cAMP and at 100 times higher concentrationsand to a lesser extent by cGMP and cCMP. cAMP binding causes a conformation change that leads to the assembly of an active tetramer and channel opening. Binding of cAMP removes a tonic inhibition conferred by cyclic nucleotide-binding domain (CNBD) on channel opening. Cyclic dinucleotides can modulate HCN4 channel; cyclic dinucleotides acting as potent antagonists of cAMP. Inhibited by extracellular Cs(+) ions. Auxiliary subunits can also regulate HCN4 channel. IRAG1 causes a gain-of-function by shifting HCN4 activation to more depolarized membrane potentials in the absence of cAMP. In contrast, IRAG2 causes a loss-of-function by inhibiting cAMP-dependent potentiation of HCN4 activation. Functionally, hyperpolarization-activated ion channel that are permeable to Na(+) and K(+) ions with very slow activation and inactivation. Exhibits higher selectivity for K(+) over Na(+) ions. Contributes to the native pacemaker currents in heart (If) that regulate the rhythm of heart beat. Contributes to the native pacemaker currents in neurons (Ih). May mediate responses to sour stimuli. The chain is Potassium/sodium hyperpolarization-activated cyclic nucleotide-gated channel 4 (Hcn4) from Rattus norvegicus (Rat).